The chain runs to 327 residues: Opticin (327 aa).

An N-terminal signal peptide occupies residues Met-1 to Thr-19. Sulfotyrosine occurs at positions 61 and 67. In terms of domain architecture, LRRNT spans Val-111–Lys-148. 7 LRR repeats span residues Thr-149 to Gly-170, Lys-173 to Leu-194, Ala-197 to Ile-218, Glu-219 to Ala-237, Lys-243 to Pro-263, Ser-264 to Asp-285, and Trp-295 to Tyr-315. An intrachain disulfide couples Cys-284 to Cys-317.

This sequence belongs to the small leucine-rich proteoglycan (SLRP) family. SLRP class III subfamily. In terms of assembly, homodimer. O-glycosylated. Post-translationally, proteolytically cleaved by MMP1, MMP2, MMP3, MMP7, MMP8, MMP9, ADAMTS4, and ADAMTS5. Proteolytically cleaved by MMP13. In terms of processing, sulfated on tyrosine residues. As to expression, ocular tissues, cartilage, ligament, skin, muscle and testes.

The protein localises to the secreted. It localises to the extracellular space. The protein resides in the extracellular matrix. Functionally, inhibits angiogenesis in the vitreous humor of the eye, and therefore represses neovascularization. Binds collagen fibrils. May be involved in collagen fiber organization via regulation of other members of the small leucine-rich repeat proteoglycan superfamily. The chain is Opticin (OPTC) from Canis lupus familiaris (Dog).